The primary structure comprises 450 residues: Large terminase protein homolog UL15b (450 aa).

It belongs to the herpesviridae large terminase family.

The sequence is that of Large terminase protein homolog UL15b (UL15b) from Psittacid herpesvirus 1 (isolate Amazon parrot/-/97-0001/1997) (PsHV-1).